Reading from the N-terminus, the 353-residue chain is Photosystem II protein D1 (353 aa).

Threonine 2 is modified (N-acetylthreonine). Position 2 is a phosphothreonine (threonine 2). 3 consecutive transmembrane segments (helical) span residues 29-46, 118-133, and 142-156; these read YIGW…TATS, HFLL…EWEL, and WIAV…AATA. Chlorophyll a is bound at residue histidine 118. Tyrosine 126 is a pheophytin a binding site. [CaMn4O5] cluster is bound by residues aspartate 170 and glutamate 189. Residues 197 to 218 form a helical membrane-spanning segment; the sequence is FHMLGVAGVFGGSLFSAMHGSL. Histidine 198 contributes to the chlorophyll a binding site. Residues histidine 215 and 264 to 265 contribute to the a quinone site; that span reads SF. Position 215 (histidine 215) interacts with Fe cation. Residue histidine 272 coordinates Fe cation. Residues 274-288 form a helical membrane-spanning segment; it reads FLAAWPVVGIWFTAL. Residues histidine 332, glutamate 333, aspartate 342, and alanine 344 each contribute to the [CaMn4O5] cluster site. The propeptide occupies 345–353; it reads AVEVPSTNG.

The protein belongs to the reaction center PufL/M/PsbA/D family. In terms of assembly, PSII is composed of 1 copy each of membrane proteins PsbA, PsbB, PsbC, PsbD, PsbE, PsbF, PsbH, PsbI, PsbJ, PsbK, PsbL, PsbM, PsbT, PsbX, PsbY, PsbZ, Psb30/Ycf12, at least 3 peripheral proteins of the oxygen-evolving complex and a large number of cofactors. It forms dimeric complexes. Requires The D1/D2 heterodimer binds P680, chlorophylls that are the primary electron donor of PSII, and subsequent electron acceptors. It shares a non-heme iron and each subunit binds pheophytin, quinone, additional chlorophylls, carotenoids and lipids. D1 provides most of the ligands for the Mn4-Ca-O5 cluster of the oxygen-evolving complex (OEC). There is also a Cl(-1) ion associated with D1 and D2, which is required for oxygen evolution. The PSII complex binds additional chlorophylls, carotenoids and specific lipids. as cofactor. Post-translationally, tyr-161 forms a radical intermediate that is referred to as redox-active TyrZ, YZ or Y-Z. C-terminally processed by CTPA; processing is essential to allow assembly of the oxygen-evolving complex and thus photosynthetic growth.

The protein resides in the plastid. Its subcellular location is the chloroplast thylakoid membrane. The catalysed reaction is 2 a plastoquinone + 4 hnu + 2 H2O = 2 a plastoquinol + O2. In terms of biological role, photosystem II (PSII) is a light-driven water:plastoquinone oxidoreductase that uses light energy to abstract electrons from H(2)O, generating O(2) and a proton gradient subsequently used for ATP formation. It consists of a core antenna complex that captures photons, and an electron transfer chain that converts photonic excitation into a charge separation. The D1/D2 (PsbA/PsbD) reaction center heterodimer binds P680, the primary electron donor of PSII as well as several subsequent electron acceptors. The chain is Photosystem II protein D1 from Eucalyptus globulus subsp. globulus (Tasmanian blue gum).